A 270-amino-acid polypeptide reads, in one-letter code: Putative pyruvate, phosphate dikinase regulatory protein (270 aa).

151–158 (GVSRTSKT) lines the ADP pocket.

The protein belongs to the pyruvate, phosphate/water dikinase regulatory protein family. PDRP subfamily.

It catalyses the reaction N(tele)-phospho-L-histidyl/L-threonyl-[pyruvate, phosphate dikinase] + ADP = N(tele)-phospho-L-histidyl/O-phospho-L-threonyl-[pyruvate, phosphate dikinase] + AMP + H(+). It carries out the reaction N(tele)-phospho-L-histidyl/O-phospho-L-threonyl-[pyruvate, phosphate dikinase] + phosphate + H(+) = N(tele)-phospho-L-histidyl/L-threonyl-[pyruvate, phosphate dikinase] + diphosphate. In terms of biological role, bifunctional serine/threonine kinase and phosphorylase involved in the regulation of the pyruvate, phosphate dikinase (PPDK) by catalyzing its phosphorylation/dephosphorylation. This Bacillus velezensis (strain DSM 23117 / BGSC 10A6 / LMG 26770 / FZB42) (Bacillus amyloliquefaciens subsp. plantarum) protein is Putative pyruvate, phosphate dikinase regulatory protein.